Consider the following 510-residue polypeptide: D-alanine--D-alanyl carrier protein ligase (510 aa).

157–158 (TS) contributes to the ATP binding site. Position 202 (Asp202) interacts with D-alanine. 297 to 302 (NTYGPT) is an ATP binding site. Val306 contributes to the D-alanine binding site. Asp389 and Lys498 together coordinate ATP. Lys498 provides a ligand contact to D-alanine.

The protein belongs to the ATP-dependent AMP-binding enzyme family. DltA subfamily.

Its subcellular location is the cytoplasm. The enzyme catalyses holo-[D-alanyl-carrier protein] + D-alanine + ATP = D-alanyl-[D-alanyl-carrier protein] + AMP + diphosphate. It functions in the pathway cell wall biogenesis; lipoteichoic acid biosynthesis. In terms of biological role, catalyzes the first step in the D-alanylation of lipoteichoic acid (LTA), the activation of D-alanine and its transfer onto the D-alanyl carrier protein (Dcp) DltC. In an ATP-dependent two-step reaction, forms a high energy D-alanyl-AMP intermediate, followed by transfer of the D-alanyl residue as a thiol ester to the phosphopantheinyl prosthetic group of the Dcp. D-alanylation of LTA plays an important role in modulating the properties of the cell wall in Gram-positive bacteria, influencing the net charge of the cell wall. In Listeria monocytogenes serotype 4b (strain CLIP80459), this protein is D-alanine--D-alanyl carrier protein ligase.